The chain runs to 372 residues: Fatty acid conjugase FAC2 B (372 aa).

2 helical membrane passes run 44–64 and 74–94; these read YFLFHDIIVTCILFYVASNYI and IVWPVYWISQGVFLGRLWMIG. The short motif at 95–99 is the Histidine box-1 element; sequence HECGH. The Histidine box-2 signature appears at 131–135; the sequence is HRNHH. 3 helical membrane-spanning segments follow: residues 166–186, 217–237, and 240–260; these read IGLMITMLCKLTFGYAAYIMF, VLFSDIGICIVLYACYRIVTV, and AMPAFYVYGIPWVIMSAILFA. The Histidine box-3 signature appears at 304–308; it reads HVIHH.

It belongs to the fatty acid desaturase type 1 family. In terms of tissue distribution, expressed exclusively in the developing seeds. Not detected in leaves.

It is found in the microsome membrane. It carries out the reaction a (9Z,12Z)-octadecadienoyl-containing glycerolipid + AH2 + O2 = a (8E,10E,12Z)-octadecatrienoyl-containing glycerolipid + A + 2 H2O. It participates in lipid metabolism; polyunsaturated fatty acid biosynthesis. In terms of biological role, fatty acid conjugase converting 18:2(9Z, 12Z) to calendic acid 18:3(8E, 10E, 12Z). Converts alpha-linolenic acid (18:3(9Z, 12Z, 15Z)) into 18:4(8E, 10E, 12Z, 15Z). Also has weak activity on the mono-unsaturates 16:1(9Z) and 18:1(9Z) producing two conjugated double bonds at delta(8) and delta(10) position. The polypeptide is Fatty acid conjugase FAC2 B (Calendula officinalis (Pot marigold)).